The following is a 174-amino-acid chain: Co-chaperone protein HscB homolog (174 aa).

One can recognise a J domain in the interval 2-74 (NYFNLFNFTP…LRRAEHLLSL (73 aa)).

Belongs to the HscB family. In terms of assembly, interacts with HscA and stimulates its ATPase activity.

Functionally, co-chaperone involved in the maturation of iron-sulfur cluster-containing proteins. Seems to help targeting proteins to be folded toward HscA. This chain is Co-chaperone protein HscB homolog, found in Shewanella denitrificans (strain OS217 / ATCC BAA-1090 / DSM 15013).